The following is a 493-amino-acid chain: MFS-type transporter efuF (493 aa).

11 helical membrane passes run 90 to 110 (ITLV…NMLL), 117 to 137 (IMLP…CAVH), 147 to 167 (LLMG…LTTF), 179 to 199 (IFYG…YGVF), 211 to 231 (FLMI…YWHL), 279 to 299 (IALY…VGNF), 316 to 336 (LYTV…CTSS), 343 to 363 (STHL…LITL), 370 to 390 (GPTY…SCIF), 406 to 426 (AVTG…SLAF), and 435 to 455 (IPAL…VLGF).

The protein belongs to the major facilitator superfamily.

Its subcellular location is the membrane. In terms of biological role, MFS-type transporter; part of the gene cluster that mediates the biosynthesis of enfumafungin, a glycosylated fernene-type triterpenoid with potent antifungal activity, mediated by its interaction with beta-1,3-glucan synthase and the fungal cell wall. Might facilitate the transport of glucose units to the subcellular site of enfumafungin biosynthesis. The sequence is that of MFS-type transporter efuF from Hormonema carpetanum.